The following is a 546-amino-acid chain: MTKYVFVTGGVVSSLGKGIASASLAALLESRGLRVTLLKLDPYINVDPGTMSPFQHGEVFVTDDGAETDLDLGHYERFSSARMSKRNNFTTGQIYKSVIDKERRGDYLGGTVQVIPHITDEIKLSIREGAKGADVALVEIGGTVGDIESLPFLEAIRQMGFEDGPANTCFIHLTLLPYIPTAGELKTKPTQHSVKELREIGIQPDILLCRADREIPLDERRKIALFTNVRPEAVIEVLDADSIYKIPAMLHEQMLDEIVCHKLNILARAADLSVWKRLVDALEHPEHTVNIAFVGKYVDLTESYKSLSEAMIHAGMHTKSRVKIHYVDSEQIEKSGVDCLRGMDAILVPGGFGKRGVEGKIAAIRYARENRVPYLGICLGMQLAVVEFARDVAGMADAQSTEFDPTTNHPVIGLITEWLDRTGQVEKRSEQSDLGGTMRLGGQPCTLKNGTLAREIYGADSIVERHRHRYEVNNTLLSELEAKGLVVAGRAPGTELCEMVELPPAVHPWFVGCQFHPEFTSNPRNGHPLFISFVRAALAHQQKDSA.

Positions 1 to 265 (MTKYVFVTGG…DEIVCHKLNI (265 aa)) are amidoligase domain. Residue Ser13 coordinates CTP. Position 13 (Ser13) interacts with UTP. ATP-binding positions include 14–19 (SLGKGI) and Asp71. The Mg(2+) site is built by Asp71 and Glu139. CTP-binding positions include 146 to 148 (DIE), 186 to 191 (KTKPTQ), and Lys222. UTP is bound by residues 186–191 (KTKPTQ) and Lys222. In terms of domain architecture, Glutamine amidotransferase type-1 spans 290-543 (NIAFVGKYVD…VRAALAHQQK (254 aa)). Gly351 lines the L-glutamine pocket. Cys378 (nucleophile; for glutamine hydrolysis) is an active-site residue. L-glutamine is bound by residues 379–382 (LGMQ), Glu402, and Arg469. Residues His516 and Glu518 contribute to the active site.

This sequence belongs to the CTP synthase family. Homotetramer.

The catalysed reaction is UTP + L-glutamine + ATP + H2O = CTP + L-glutamate + ADP + phosphate + 2 H(+). It catalyses the reaction L-glutamine + H2O = L-glutamate + NH4(+). The enzyme catalyses UTP + NH4(+) + ATP = CTP + ADP + phosphate + 2 H(+). The protein operates within pyrimidine metabolism; CTP biosynthesis via de novo pathway; CTP from UDP: step 2/2. With respect to regulation, allosterically activated by GTP, when glutamine is the substrate; GTP has no effect on the reaction when ammonia is the substrate. The allosteric effector GTP functions by stabilizing the protein conformation that binds the tetrahedral intermediate(s) formed during glutamine hydrolysis. Inhibited by the product CTP, via allosteric rather than competitive inhibition. Catalyzes the ATP-dependent amination of UTP to CTP with either L-glutamine or ammonia as the source of nitrogen. Regulates intracellular CTP levels through interactions with the four ribonucleotide triphosphates. The chain is CTP synthase from Thiobacillus denitrificans (strain ATCC 25259 / T1).